Reading from the N-terminus, the 113-residue chain is T cell receptor alpha variable 8-1 (113 aa).

A signal peptide spans methionine 1–alanine 20. The Ig-like domain maps to glutamine 21–asparagine 113. The cysteines at positions 42 and 110 are disulfide-linked. Asparagine 43 is a glycosylation site (N-linked (GlcNAc...) asparagine).

In terms of assembly, alpha-beta TR is a heterodimer composed of an alpha and beta chain; disulfide-linked. The alpha-beta TR is associated with the transmembrane signaling CD3 coreceptor proteins to form the TR-CD3 (TcR or TCR). The assembly of alpha-beta TR heterodimers with CD3 occurs in the endoplasmic reticulum where a single alpha-beta TR heterodimer associates with one CD3D-CD3E heterodimer, one CD3G-CD3E heterodimer and one CD247 homodimer forming a stable octameric structure. CD3D-CD3E and CD3G-CD3E heterodimers preferentially associate with TR alpha and TR beta chains, respectively. The association of the CD247 homodimer is the last step of TcR assembly in the endoplasmic reticulum and is required for transport to the cell surface.

It is found in the cell membrane. In terms of biological role, v region of the variable domain of T cell receptor (TR) alpha chain that participates in the antigen recognition. Alpha-beta T cell receptors are antigen specific receptors which are essential to the immune response and are present on the cell surface of T lymphocytes. Recognize peptide-major histocompatibility (MH) (pMH) complexes that are displayed by antigen presenting cells (APC), a prerequisite for efficient T cell adaptive immunity against pathogens. Binding of alpha-beta TR to pMH complex initiates TR-CD3 clustering on the cell surface and intracellular activation of LCK that phosphorylates the ITAM motifs of CD3G, CD3D, CD3E and CD247 enabling the recruitment of ZAP70. In turn ZAP70 phosphorylates LAT, which recruits numerous signaling molecules to form the LAT signalosome. The LAT signalosome propagates signal branching to three major signaling pathways, the calcium, the mitogen-activated protein kinase (MAPK) kinase and the nuclear factor NF-kappa-B (NF-kB) pathways, leading to the mobilization of transcription factors that are critical for gene expression and essential for T cell growth and differentiation. The T cell repertoire is generated in the thymus, by V-(D)-J rearrangement. This repertoire is then shaped by intrathymic selection events to generate a peripheral T cell pool of self-MH restricted, non-autoaggressive T cells. Post-thymic interaction of alpha-beta TR with the pMH complexes shapes TR structural and functional avidity. The protein is T cell receptor alpha variable 8-1 of Homo sapiens (Human).